A 381-amino-acid chain; its full sequence is Beta-lactamase (381 aa).

Residues 1 to 20 form the signal peptide; that stretch reads MMKKSICCALLLTASFSTFA. Ser-84 (acyl-ester intermediate) is an active-site residue. Tyr-170 acts as the Proton acceptor in catalysis. Position 335-337 (335-337) interacts with substrate; that stretch reads KTG.

It belongs to the class-C beta-lactamase family.

The protein resides in the periplasm. It carries out the reaction a beta-lactam + H2O = a substituted beta-amino acid. Sulbactam is an effective progressive inhibitor but a poor competitive inhibitor. In terms of biological role, this protein is a serine beta-lactamase with a substrate specificity for cephalosporins. The chain is Beta-lactamase (ampC) from Citrobacter freundii.